We begin with the raw amino-acid sequence, 196 residues long: Alpha-crystallin A chain (196 aa).

Position 1 is an N-acetylmethionine (Met-1). The segment at 1–63 (MDVTIQHPWF…RTVLDSGISE (63 aa)) is required for complex formation with BFSP1 and BFSP2. Gln-6 bears the Deamidated glutamine; partial mark. Ser-45 carries the post-translational modification Phosphoserine. Gln-50 is modified (deamidated glutamine; partial). A sHSP domain is found at 76–185 (HAGNPKNNPI…GHSERAIPVS (110 aa)). Lys-93 and Lys-122 each carry N6-acetyllysine. His-123 contacts Zn(2+). Asn-124 is modified (deamidated asparagine; partial). 2 residues coordinate Zn(2+): Glu-125 and His-130. The residue at position 145 (Ser-145) is a Phosphoserine. A Deamidated asparagine; partial modification is found at Asn-146. The disordered stretch occupies residues 168–196 (KVQSGLDAGHSERAIPVSREEKPSSAPSS). Gln-170 bears the Deamidated glutamine; partial mark. Basic and acidic residues predominate over residues 176-190 (GHSERAIPVSREEKP). His-177 provides a ligand contact to Zn(2+). Ser-185 carries an O-linked (GlcNAc) serine glycan.

Belongs to the small heat shock protein (HSP20) family. Heteromer composed of three CRYAA and one CRYAB subunits. Inter-subunit bridging via zinc ions enhances stability, which is crucial as there is no protein turn over in the lens. Can also form homodimers and homotetramers (dimers of dimers) which serve as the building blocks of homooligomers. Within homooligomers, the zinc-binding motif is created from residues of 3 different molecules. His-123 and Glu-125 from one molecule are ligands of the zinc ion, and His-130 and His-177 residues from additional molecules complete the site with tetrahedral coordination geometry. Part of a complex required for lens intermediate filament formation composed of BFSP1, BFSP2 and CRYAA. Post-translationally, acetylation at Lys-93 may increase chaperone activity. Undergoes age-dependent proteolytical cleavage at the C-terminus.

Its subcellular location is the cytoplasm. It is found in the nucleus. Functionally, contributes to the transparency and refractive index of the lens. Acts as a chaperone, preventing aggregation of various proteins under a wide range of stress conditions. Required for the correct formation of lens intermediate filaments as part of a complex composed of BFSP1, BFSP2 and CRYAA. In Mesocricetus auratus (Golden hamster), this protein is Alpha-crystallin A chain (CRYAA).